A 327-amino-acid polypeptide reads, in one-letter code: Malate dehydrogenase (327 aa).

An NAD(+)-binding site is contributed by 12-18 (GAAGQIA). Residues Arg93 and Arg99 each contribute to the substrate site. Residues Asn106, Gln113, and 130-132 (VGN) each bind NAD(+). Positions 132 and 163 each coordinate substrate. The active-site Proton acceptor is the His188.

This sequence belongs to the LDH/MDH superfamily. MDH type 2 family.

The enzyme catalyses (S)-malate + NAD(+) = oxaloacetate + NADH + H(+). In terms of biological role, catalyzes the reversible oxidation of malate to oxaloacetate. The protein is Malate dehydrogenase of Burkholderia mallei (strain NCTC 10247).